A 98-amino-acid polypeptide reads, in one-letter code: DNA-binding protein Fis (98 aa).

The segment at residues 74–93 (QTRAATMLGINRGTLRKKLK) is a DNA-binding region (H-T-H motif).

This sequence belongs to the transcriptional regulatory Fis family. Homodimer.

In terms of biological role, activates ribosomal RNA transcription. Plays a direct role in upstream activation of rRNA promoters. This is DNA-binding protein Fis from Haemophilus ducreyi (strain 35000HP / ATCC 700724).